The chain runs to 255 residues: 5-oxoprolinase subunit A (255 aa).

Belongs to the LamB/PxpA family. In terms of assembly, forms a complex composed of PxpA, PxpB and PxpC.

It catalyses the reaction 5-oxo-L-proline + ATP + 2 H2O = L-glutamate + ADP + phosphate + H(+). In terms of biological role, catalyzes the cleavage of 5-oxoproline to form L-glutamate coupled to the hydrolysis of ATP to ADP and inorganic phosphate. This chain is 5-oxoprolinase subunit A, found in Rhodopseudomonas palustris (strain BisB18).